A 435-amino-acid chain; its full sequence is Palmitoyltransferase pfa4 (435 aa).

Residues 1 to 10 (MLCSSFSVSR) are Cytoplasmic-facing. Residues 11–31 (LAIPAVCILIAFLAYTSQIFF) form a helical membrane-spanning segment. At 32–48 (LYFEDAPLKEDEVWRIN) the chain is on the lumenal side. A helical membrane pass occupies residues 49-69 (ILAICIWICYYRACTVDPGHV). Residues 70–129 (PKGWMPSDRERLKADRASGRQRWCRRCEAYKPPRAHHCKTCERCVPKMDHHCPWTSNCVS) lie on the Cytoplasmic side of the membrane. The 51-residue stretch at 91–141 (RWCRRCEAYKPPRAHHCKTCERCVPKMDHHCPWTSNCVSHFTFPHFARFLF) folds into the DHHC domain. Residue cysteine 121 is the S-palmitoyl cysteine intermediate of the active site. A helical membrane pass occupies residues 130–150 (HFTFPHFARFLFYAVVGIAYL). Residues 151 to 179 (ETRLWQRVSKVWGSRHLPSYLGPSMGQIG) lie on the Lumenal side of the membrane. The helical transmembrane segment at 180–200 (HLFVLFVTNSLTLFALSLLLL) threads the bilayer. At 201–435 (RTLWSLGSNT…QRAKRQHLSQ (235 aa)) the chain is on the cytoplasmic side. Residues 359-368 (RKPFHVRLEE) show a composition bias toward basic and acidic residues. The disordered stretch occupies residues 359–408 (RKPFHVRLEEYSNGSSDAEADTGSDDDSDHGEEGWKNSEGERLRDFGVDE). Residues 376–388 (AEADTGSDDDSDH) are compositionally biased toward acidic residues. The segment covering 389-405 (GEEGWKNSEGERLRDFG) has biased composition (basic and acidic residues).

This sequence belongs to the DHHC palmitoyltransferase family. PFA4 subfamily.

The protein resides in the endoplasmic reticulum membrane. It catalyses the reaction L-cysteinyl-[protein] + hexadecanoyl-CoA = S-hexadecanoyl-L-cysteinyl-[protein] + CoA. Its function is as follows. Mediates the reversible addition of palmitate to target proteins, thereby regulating their membrane association and biological function. The polypeptide is Palmitoyltransferase pfa4 (Emericella nidulans (strain FGSC A4 / ATCC 38163 / CBS 112.46 / NRRL 194 / M139) (Aspergillus nidulans)).